A 107-amino-acid chain; its full sequence is Nucleoid-associated protein CE0210 (107 aa).

The protein belongs to the YbaB/EbfC family. Homodimer.

The protein localises to the cytoplasm. Its subcellular location is the nucleoid. In terms of biological role, binds to DNA and alters its conformation. May be involved in regulation of gene expression, nucleoid organization and DNA protection. The protein is Nucleoid-associated protein CE0210 of Corynebacterium efficiens (strain DSM 44549 / YS-314 / AJ 12310 / JCM 11189 / NBRC 100395).